Reading from the N-terminus, the 428-residue chain is Cysteine--tRNA ligase (428 aa).

A Zn(2+)-binding site is contributed by cysteine 23. A 'HIGH' region motif is present at residues 25 to 35; the sequence is PTVYNDLHLGN. Zn(2+) contacts are provided by cysteine 196, histidine 221, and glutamate 225. Positions 253–257 match the 'KMSKS' region motif; that stretch reads KMSKS. Residue lysine 256 participates in ATP binding.

Belongs to the class-I aminoacyl-tRNA synthetase family. In terms of assembly, monomer. Zn(2+) is required as a cofactor.

Its subcellular location is the cytoplasm. It carries out the reaction tRNA(Cys) + L-cysteine + ATP = L-cysteinyl-tRNA(Cys) + AMP + diphosphate. This is Cysteine--tRNA ligase (cysS) from Mycoplasma genitalium (strain ATCC 33530 / DSM 19775 / NCTC 10195 / G37) (Mycoplasmoides genitalium).